A 488-amino-acid chain; its full sequence is Germacrene A hydroxylase (488 aa).

The chain crosses the membrane as a helical; Signal-anchor for type II membrane protein span at residues 7–23 (TSIALATILFFVYKFAT). N-linked (GlcNAc...) asparagine glycosylation is found at asparagine 169, asparagine 260, asparagine 379, and asparagine 410. A heme-binding site is contributed by cysteine 432.

The protein belongs to the cytochrome P450 family. In terms of tissue distribution, expressed in floral glandular trichomes.

Its subcellular location is the endoplasmic reticulum membrane. It catalyses the reaction (+)-(R)-germacrene A + 3 reduced [NADPH--hemoprotein reductase] + 3 O2 = germacra-1(10),4,11(13)-trien-12-oate + 3 oxidized [NADPH--hemoprotein reductase] + 4 H2O + 4 H(+). It functions in the pathway secondary metabolite biosynthesis; terpenoid biosynthesis. In terms of biological role, involved in the biosynthesis of germacrene-derived sesquiterpene lactones. Component of the parthenolide biosynthetic pathway; parthenolide and conjugates are promising anti-cancer drugs highly active against colon cancer cells. Catalyzes three consecutive oxidations of germacrene A to produce germacrene A acid. The chain is Germacrene A hydroxylase from Tanacetum parthenium (Feverfew).